The sequence spans 486 residues: Glycogen synthase (486 aa).

Residue Lys15 coordinates ADP-alpha-D-glucose.

It belongs to the glycosyltransferase 1 family. Bacterial/plant glycogen synthase subfamily.

It catalyses the reaction [(1-&gt;4)-alpha-D-glucosyl](n) + ADP-alpha-D-glucose = [(1-&gt;4)-alpha-D-glucosyl](n+1) + ADP + H(+). It participates in glycan biosynthesis; glycogen biosynthesis. Its function is as follows. Synthesizes alpha-1,4-glucan chains using ADP-glucose. The chain is Glycogen synthase from Thermotoga maritima (strain ATCC 43589 / DSM 3109 / JCM 10099 / NBRC 100826 / MSB8).